We begin with the raw amino-acid sequence, 377 residues long: Outer membrane porin N (377 aa).

Positions 1–21 are cleaved as a signal peptide; it reads MKSKVLALLIPALLAAGAAHA. Residues 175–189 show a composition bias toward polar residues; it reads NNEGASNGQEGTNNG. A disordered region spans residues 175–196; sequence NNEGASNGQEGTNNGRDVRHEN.

It belongs to the Gram-negative porin family. Homotrimer.

It is found in the cell outer membrane. Its function is as follows. Forms pores that allow passive diffusion of small molecules across the outer membrane. Non-specific porin. This chain is Outer membrane porin N (ompN), found in Escherichia coli (strain K12).